We begin with the raw amino-acid sequence, 301 residues long: HPr kinase/phosphorylase (301 aa).

Residues histidine 134 and lysine 155 contribute to the active site. 149 to 156 (GKSGLGKS) is an ATP binding site. Position 156 (serine 156) interacts with Mg(2+). The active-site Proton acceptor; for phosphorylation activity. Proton donor; for dephosphorylation activity is the aspartate 173. Residues 196–205 (LEVRGLGIIN) are important for the catalytic mechanism of both phosphorylation and dephosphorylation. Glutamate 197 lines the Mg(2+) pocket. The active site involves arginine 239. The interval 260-265 (PITPGK) is important for the catalytic mechanism of dephosphorylation.

It belongs to the HPrK/P family. Homohexamer. It depends on Mg(2+) as a cofactor.

It carries out the reaction [HPr protein]-L-serine + ATP = [HPr protein]-O-phospho-L-serine + ADP + H(+). The enzyme catalyses [HPr protein]-O-phospho-L-serine + phosphate + H(+) = [HPr protein]-L-serine + diphosphate. In terms of biological role, catalyzes the ATP- as well as the pyrophosphate-dependent phosphorylation of a specific serine residue in HPr, a phosphocarrier protein of the phosphoenolpyruvate-dependent sugar phosphotransferase system (PTS). HprK/P also catalyzes the pyrophosphate-producing, inorganic phosphate-dependent dephosphorylation (phosphorolysis) of seryl-phosphorylated HPr (P-Ser-HPr). The two antagonistic activities of HprK/P are regulated by several intracellular metabolites, which change their concentration in response to the absence or presence of rapidly metabolisable carbon sources (glucose, fructose, etc.) in the growth medium. Therefore, by controlling the phosphorylation state of HPr, HPrK/P is a sensor enzyme that plays a major role in the regulation of carbon metabolism and sugar transport: it mediates carbon catabolite repression (CCR), and regulates PTS-catalyzed carbohydrate uptake and inducer exclusion. This chain is HPr kinase/phosphorylase, found in Malacoplasma penetrans (strain HF-2) (Mycoplasma penetrans).